The sequence spans 229 residues: Probable GTP-binding protein EngB (229 aa).

An EngB-type G domain is found at 53–228 (DLPEVAFAGR…RAEIVRLCID (176 aa)). GTP-binding positions include 61 to 68 (GRSNVGKS), 88 to 92 (GRTRE), 106 to 109 (DLPG), 173 to 176 (TKAD), and 207 to 209 (TSS). S68 and T90 together coordinate Mg(2+).

The protein belongs to the TRAFAC class TrmE-Era-EngA-EngB-Septin-like GTPase superfamily. EngB GTPase family. It depends on Mg(2+) as a cofactor.

Its function is as follows. Necessary for normal cell division and for the maintenance of normal septation. The polypeptide is Probable GTP-binding protein EngB (Caulobacter vibrioides (strain NA1000 / CB15N) (Caulobacter crescentus)).